A 625-amino-acid chain; its full sequence is Exonuclease mut-7 homolog (625 aa).

At Ser17 the chain carries Phosphoserine. One can recognise a 3'-5' exonuclease domain in the interval 410–602; the sequence is LIIVNKADEF…IYNTLIERVS (193 aa).

Belongs to the mut-7 family. In terms of assembly, interacts with AGO1; the interaction is not RNA dependent. Requires Mg(2+) as cofactor.

Possesses 3'-5' exoribonuclease activity. Required for 3'-end trimming of AGO1-bound miRNAs, in particular multiple-isoform miRNAs, which represents a critical step in miRNA maturation. This chain is Exonuclease mut-7 homolog (Nbr), found in Drosophila melanogaster (Fruit fly).